We begin with the raw amino-acid sequence, 311 residues long: GTP cyclohydrolase FolE2 (311 aa).

The protein belongs to the GTP cyclohydrolase IV family.

The catalysed reaction is GTP + H2O = 7,8-dihydroneopterin 3'-triphosphate + formate + H(+). The protein operates within cofactor biosynthesis; 7,8-dihydroneopterin triphosphate biosynthesis; 7,8-dihydroneopterin triphosphate from GTP: step 1/1. In terms of biological role, converts GTP to 7,8-dihydroneopterin triphosphate. This Xanthomonas campestris pv. campestris (strain B100) protein is GTP cyclohydrolase FolE2.